The sequence spans 433 residues: D-amino acid dehydrogenase (433 aa).

An FAD-binding site is contributed by 3–17 (VLVLGSGVIGTASAY).

It belongs to the DadA oxidoreductase family. FAD serves as cofactor.

It carries out the reaction a D-alpha-amino acid + A + H2O = a 2-oxocarboxylate + AH2 + NH4(+). Its pathway is amino-acid degradation; D-alanine degradation; NH(3) and pyruvate from D-alanine: step 1/1. Its function is as follows. Oxidative deamination of D-amino acids. The chain is D-amino acid dehydrogenase from Pseudomonas putida (strain W619).